A 156-amino-acid chain; its full sequence is Small ribosomal subunit protein uS7 (156 aa).

The protein belongs to the universal ribosomal protein uS7 family. In terms of assembly, part of the 30S ribosomal subunit. Contacts proteins S9 and S11.

One of the primary rRNA binding proteins, it binds directly to 16S rRNA where it nucleates assembly of the head domain of the 30S subunit. Is located at the subunit interface close to the decoding center, probably blocks exit of the E-site tRNA. In Pseudomonas fluorescens (strain ATCC BAA-477 / NRRL B-23932 / Pf-5), this protein is Small ribosomal subunit protein uS7.